Here is a 143-residue protein sequence, read N- to C-terminus: Transcriptional regulator MraZ (143 aa).

SpoVT-AbrB domains follow at residues 5-47 (TYTP…PKEE) and 76-119 (ADEQ…DAQA).

This sequence belongs to the MraZ family. In terms of assembly, forms oligomers.

It localises to the cytoplasm. The protein localises to the nucleoid. This Corynebacterium efficiens (strain DSM 44549 / YS-314 / AJ 12310 / JCM 11189 / NBRC 100395) protein is Transcriptional regulator MraZ.